The following is a 256-amino-acid chain: Isoprenyl transferase 1 (256 aa).

D34 is a catalytic residue. D34 is a Mg(2+) binding site. Substrate contacts are provided by residues 35-38, W39, H52, and 80-82; these read GNRR and STE. The Proton acceptor role is filled by N83. Substrate is bound by residues R86, R205, and 211–213; that span reads RLS. E224 lines the Mg(2+) pocket.

The protein belongs to the UPP synthase family. Homodimer. The cofactor is Mg(2+).

Catalyzes the condensation of isopentenyl diphosphate (IPP) with allylic pyrophosphates generating different type of terpenoids. This chain is Isoprenyl transferase 1, found in Corynebacterium efficiens (strain DSM 44549 / YS-314 / AJ 12310 / JCM 11189 / NBRC 100395).